The sequence spans 80 residues: Cell division protein ZapB (80 aa).

Residues 3–80 (FEVLEKLEAK…ALLGKMEDVE (78 aa)) are a coiled coil.

The protein belongs to the ZapB family. As to quaternary structure, homodimer. The ends of the coiled-coil dimer bind to each other, forming polymers. Interacts with FtsZ.

Its subcellular location is the cytoplasm. Its function is as follows. Non-essential, abundant cell division factor that is required for proper Z-ring formation. It is recruited early to the divisome by direct interaction with FtsZ, stimulating Z-ring assembly and thereby promoting cell division earlier in the cell cycle. Its recruitment to the Z-ring requires functional FtsA or ZipA. In Vibrio vulnificus (strain CMCP6), this protein is Cell division protein ZapB.